Here is a 287-residue protein sequence, read N- to C-terminus: tRNA pseudouridine synthase B (287 aa).

The active-site Nucleophile is aspartate 38.

The protein belongs to the pseudouridine synthase TruB family. Type 1 subfamily.

It carries out the reaction uridine(55) in tRNA = pseudouridine(55) in tRNA. Its function is as follows. Responsible for synthesis of pseudouridine from uracil-55 in the psi GC loop of transfer RNAs. The polypeptide is tRNA pseudouridine synthase B (Mycoplasma mobile (strain ATCC 43663 / 163K / NCTC 11711) (Mesomycoplasma mobile)).